A 373-amino-acid chain; its full sequence is Alanine racemase (373 aa).

Catalysis depends on K40, which acts as the Proton acceptor; specific for D-alanine. Position 40 is an N6-(pyridoxal phosphate)lysine (K40). R140 contributes to the substrate binding site. Residue Y268 is the Proton acceptor; specific for L-alanine of the active site. M315 serves as a coordination point for substrate.

This sequence belongs to the alanine racemase family. Pyridoxal 5'-phosphate is required as a cofactor.

It carries out the reaction L-alanine = D-alanine. The protein operates within amino-acid biosynthesis; D-alanine biosynthesis; D-alanine from L-alanine: step 1/1. Its function is as follows. Catalyzes the interconversion of L-alanine and D-alanine. May also act on other amino acids. The protein is Alanine racemase (alr) of Limosilactobacillus fermentum (strain NBRC 3956 / LMG 18251) (Lactobacillus fermentum).